We begin with the raw amino-acid sequence, 185 residues long: Ribosome maturation factor RimM (185 aa).

The region spanning 106-185 (TGDYYWKDLI…TIEVDWDPGF (80 aa)) is the PRC barrel domain.

Belongs to the RimM family. Binds ribosomal protein uS19.

It localises to the cytoplasm. An accessory protein needed during the final step in the assembly of 30S ribosomal subunit, possibly for assembly of the head region. Essential for efficient processing of 16S rRNA. May be needed both before and after RbfA during the maturation of 16S rRNA. It has affinity for free ribosomal 30S subunits but not for 70S ribosomes. The chain is Ribosome maturation factor RimM from Photorhabdus laumondii subsp. laumondii (strain DSM 15139 / CIP 105565 / TT01) (Photorhabdus luminescens subsp. laumondii).